Reading from the N-terminus, the 429-residue chain is Serine hydroxymethyltransferase (429 aa).

(6S)-5,6,7,8-tetrahydrofolate is bound by residues Leu-133 and 137–139 (GHL). An N6-(pyridoxal phosphate)lysine modification is found at Lys-243. Glu-259 is a binding site for (6S)-5,6,7,8-tetrahydrofolate.

Belongs to the SHMT family. In terms of assembly, homodimer. It depends on pyridoxal 5'-phosphate as a cofactor.

It localises to the cytoplasm. It carries out the reaction (6R)-5,10-methylene-5,6,7,8-tetrahydrofolate + glycine + H2O = (6S)-5,6,7,8-tetrahydrofolate + L-serine. The protein operates within one-carbon metabolism; tetrahydrofolate interconversion. It functions in the pathway amino-acid biosynthesis; glycine biosynthesis; glycine from L-serine: step 1/1. Functionally, catalyzes the reversible interconversion of serine and glycine with tetrahydrofolate (THF) serving as the one-carbon carrier. This reaction serves as the major source of one-carbon groups required for the biosynthesis of purines, thymidylate, methionine, and other important biomolecules. Also exhibits THF-independent aldolase activity toward beta-hydroxyamino acids, producing glycine and aldehydes, via a retro-aldol mechanism. In Aster yellows witches'-broom phytoplasma (strain AYWB), this protein is Serine hydroxymethyltransferase.